Consider the following 72-residue polypeptide: Protein SlyX homolog (72 aa).

The protein belongs to the SlyX family.

The polypeptide is Protein SlyX homolog (Vibrio cholerae serotype O1 (strain ATCC 39541 / Classical Ogawa 395 / O395)).